We begin with the raw amino-acid sequence, 400 residues long: Elongation factor Tu (400 aa).

The tr-type G domain maps to Lys-10–Gln-208. A G1 region spans residues Gly-19–Ser-26. Residue Gly-19–Ser-26 coordinates GTP. Position 26 (Ser-26) interacts with Mg(2+). The interval Gly-60 to Asn-64 is G2. The tract at residues Asp-81 to Gly-84 is G3. GTP contacts are provided by residues Asp-81–His-85 and Asn-136–Asp-139. The interval Asn-136–Asp-139 is G4. Positions Ser-174 to Leu-176 are G5.

Belongs to the TRAFAC class translation factor GTPase superfamily. Classic translation factor GTPase family. EF-Tu/EF-1A subfamily. As to quaternary structure, monomer.

It is found in the cytoplasm. It carries out the reaction GTP + H2O = GDP + phosphate + H(+). GTP hydrolase that promotes the GTP-dependent binding of aminoacyl-tRNA to the A-site of ribosomes during protein biosynthesis. The protein is Elongation factor Tu of Thermotoga maritima (strain ATCC 43589 / DSM 3109 / JCM 10099 / NBRC 100826 / MSB8).